The chain runs to 175 residues: Small ribosomal subunit protein uS4 (175 aa).

The S4 RNA-binding domain maps to 105–169 (RRLQTIVYRQ…SPLADSLHPA (65 aa)).

This sequence belongs to the universal ribosomal protein uS4 family. As to quaternary structure, part of the 30S ribosomal subunit. Contacts protein S5. The interaction surface between S4 and S5 is involved in control of translational fidelity.

In terms of biological role, one of the primary rRNA binding proteins, it binds directly to 16S rRNA where it nucleates assembly of the body of the 30S subunit. Its function is as follows. With S5 and S12 plays an important role in translational accuracy. The polypeptide is Small ribosomal subunit protein uS4 (Haloquadratum walsbyi (strain DSM 16790 / HBSQ001)).